The chain runs to 460 residues: A-type ATP synthase subunit B (460 aa).

Belongs to the ATPase alpha/beta chains family. In terms of assembly, has multiple subunits, A(3), B(3), C, D, E, F, G, I and K(x); there may be a few other subunits as well.

It is found in the cell membrane. Functionally, component of the A-type ATP synthase that produces ATP from ADP in the presence of a proton gradient across the membrane. The B chain is a regulatory subunit. This Methanosarcina mazei (strain ATCC BAA-159 / DSM 3647 / Goe1 / Go1 / JCM 11833 / OCM 88) (Methanosarcina frisia) protein is A-type ATP synthase subunit B.